A 79-amino-acid chain; its full sequence is uncharacterized protein (79 aa).

This is an uncharacterized protein from Listeria innocua serovar 6a (strain ATCC BAA-680 / CLIP 11262).